The chain runs to 166 residues: Large ribosomal subunit protein eL14 (166 aa).

Positions 135–166 are disordered; sequence KADGTPRVLKKDRRERLRAEKAKGGKKAAAKK. Over residues 146–157 the composition is skewed to basic and acidic residues; that stretch reads DRRERLRAEKAK.

Belongs to the eukaryotic ribosomal protein eL14 family.

This is Large ribosomal subunit protein eL14 (RpL14) from Drosophila melanogaster (Fruit fly).